The following is a 688-amino-acid chain: Glycine--tRNA ligase beta subunit (688 aa).

This sequence belongs to the class-II aminoacyl-tRNA synthetase family. As to quaternary structure, tetramer of two alpha and two beta subunits.

The protein resides in the cytoplasm. The enzyme catalyses tRNA(Gly) + glycine + ATP = glycyl-tRNA(Gly) + AMP + diphosphate. This is Glycine--tRNA ligase beta subunit from Vibrio parahaemolyticus serotype O3:K6 (strain RIMD 2210633).